We begin with the raw amino-acid sequence, 493 residues long: Aspartyl/glutamyl-tRNA(Asn/Gln) amidotransferase subunit B (493 aa).

Belongs to the GatB/GatE family. GatB subfamily. In terms of assembly, heterotrimer of A, B and C subunits.

The enzyme catalyses L-glutamyl-tRNA(Gln) + L-glutamine + ATP + H2O = L-glutaminyl-tRNA(Gln) + L-glutamate + ADP + phosphate + H(+). It carries out the reaction L-aspartyl-tRNA(Asn) + L-glutamine + ATP + H2O = L-asparaginyl-tRNA(Asn) + L-glutamate + ADP + phosphate + 2 H(+). Allows the formation of correctly charged Asn-tRNA(Asn) or Gln-tRNA(Gln) through the transamidation of misacylated Asp-tRNA(Asn) or Glu-tRNA(Gln) in organisms which lack either or both of asparaginyl-tRNA or glutaminyl-tRNA synthetases. The reaction takes place in the presence of glutamine and ATP through an activated phospho-Asp-tRNA(Asn) or phospho-Glu-tRNA(Gln). This chain is Aspartyl/glutamyl-tRNA(Asn/Gln) amidotransferase subunit B, found in Aromatoleum aromaticum (strain DSM 19018 / LMG 30748 / EbN1) (Azoarcus sp. (strain EbN1)).